A 342-amino-acid polypeptide reads, in one-letter code: 4-hydroxy-2-oxovalerate aldolase (342 aa).

A Pyruvate carboxyltransferase domain is found at 5 to 257 (ITLHDMTLRD…DTGVDVWKIQ (253 aa)). 13-14 (RD) serves as a coordination point for substrate. Aspartate 14 lines the Mn(2+) pocket. Histidine 17 functions as the Proton acceptor in the catalytic mechanism. Residues serine 167 and histidine 196 each coordinate substrate. The Mn(2+) site is built by histidine 196 and histidine 198. Tyrosine 287 serves as a coordination point for substrate.

Belongs to the 4-hydroxy-2-oxovalerate aldolase family.

The catalysed reaction is (S)-4-hydroxy-2-oxopentanoate = acetaldehyde + pyruvate. This is 4-hydroxy-2-oxovalerate aldolase from Acidovorax sp. (strain JS42).